The chain runs to 488 residues: Transmembrane protein 39A (488 aa).

N31 and N39 each carry an N-linked (GlcNAc...) asparagine glycan. 8 consecutive transmembrane segments (helical) span residues 72 to 92 (SLLF…IQYI), 110 to 130 (TSLN…VMLA), 154 to 174 (VLIS…CWTL), 182 to 202 (SVLN…LCCF), 287 to 307 (EVLF…LCFV), 319 to 339 (CEHL…QLLP), 420 to 440 (LLNL…YSLL), and 446 to 466 (NHTL…FKLL).

Belongs to the TMEM39 family. As to quaternary structure, interacts with SACM1L, SEC23A and SEC24A. (Microbial infection) Interacts with encephalomyocarditis virus (EMCV) major capsid proteins VP1 and VP2. As to expression, up-regulated in brain tumor glioblastoma multiforme cells (at protein level).

It is found in the endoplasmic reticulum membrane. Its function is as follows. Regulates autophagy by controlling the spatial distribution and levels of the intracellular phosphatidylinositol 4-phosphate (PtdIns(4)P) pools. Modulates (PtdIns(4)P) levels by regulating the ER-to-Golgi trafficking of the phosphatidylinositide phosphatase SACM1L. Functionally, (Microbial infection) Positively regulates the replication of encephalomyocarditis virus (EMCV) via autophagy-dependent pathway. This is Transmembrane protein 39A (TMEM39A) from Homo sapiens (Human).